A 396-amino-acid polypeptide reads, in one-letter code: Elongation factor Tu (396 aa).

Positions K10 to V206 constitute a tr-type G domain. The segment at G19–T26 is G1. G19–T26 provides a ligand contact to GTP. A Mg(2+)-binding site is contributed by T26. A G2 region spans residues G60–S64. The G3 stretch occupies residues D81–G84. Residues D81 to H85 and N136 to D139 contribute to the GTP site. The interval N136 to D139 is G4. The G5 stretch occupies residues S174–L176.

Belongs to the TRAFAC class translation factor GTPase superfamily. Classic translation factor GTPase family. EF-Tu/EF-1A subfamily. Monomer.

The protein resides in the cytoplasm. The enzyme catalyses GTP + H2O = GDP + phosphate + H(+). In terms of biological role, GTP hydrolase that promotes the GTP-dependent binding of aminoacyl-tRNA to the A-site of ribosomes during protein biosynthesis. The polypeptide is Elongation factor Tu (Legionella pneumophila (strain Paris)).